A 295-amino-acid polypeptide reads, in one-letter code: Vesicle-associated protein 4-2 (295 aa).

Over residues 1 to 10 (MTMTEEKPTS) the composition is skewed to basic and acidic residues. A disordered region spans residues 1-99 (MTMTEEKPTS…PSPSVSSVAK (99 aa)). Residues 31-53 (NAASSAATSPFPSGASSSSTSSH) show a composition bias toward low complexity. Residues 54 to 71 (LHNHHQHHHQHHHQHHHQ) are compositionally biased toward basic residues. Polar residues predominate over residues 83 to 98 (GQNQHPTPSPSVSSVA). The region spanning 107–229 (RLKLDPSEKL…KEQILRVIFL (123 aa)) is the MSP domain. Basic and acidic residues predominate over residues 249–263 (DAAVEARKKPPEETG). The interval 249–270 (DAAVEARKKPPEETGPKMIGEG) is disordered. Phosphoserine is present on Ser294.

Belongs to the VAMP-associated protein (VAP) (TC 9.B.17) family.

May play a role in vesicle trafficking. The chain is Vesicle-associated protein 4-2 (PVA42) from Arabidopsis thaliana (Mouse-ear cress).